The chain runs to 1104 residues: SWI/SNF complex subunit SMARCC1 (1104 aa).

Residues 27–301 (LAVYRRKDGG…PVSFRQRIST (275 aa)) are marR-like, BRCT and chromo domains module. The region spanning 37–163 (PASKFWESPD…IEKTLVQNNC (127 aa)) is the MarR-like domain. The region spanning 167 to 210 (PNIYLIPDIDLKLANKLKDIIKRHQGTFTDEKSKASHHIYPYPS) is the BRCT; N-terminus domain. K178 is covalently cross-linked (Glycyl lysine isopeptide (Lys-Gly) (interchain with G-Cter in SUMO2)). A Chromo domain is found at 216 to 244 (EWLRPVMRRDKQVLVHWGFYPDSYDTWVH). The 25-residue stretch at 260–284 (KPWKVHVKWILDTDVFNEWMNEEDY) folds into the BRCT; C-terminus domain. Residues 295–445 (FRQRISTKNE…PGEDNVTEQT (151 aa)) form a disordered region. Positions 301–317 (TKNEEPVRSPERRDRKA) are enriched in basic and acidic residues. S309, S327, and S329 each carry phosphoserine. T334 bears the Phosphothreonine mark. N6-acetyllysine occurs at positions 344 and 345. A Phosphoserine modification is found at S349. K353 carries the N6-acetyllysine modification. S356 carries the phosphoserine modification. K358 carries the N6-acetyllysine; alternate modification. K358 participates in a covalent cross-link: Glycyl lysine isopeptide (Lys-Gly) (interchain with G-Cter in SUMO2); alternate. Phosphothreonine is present on T397. In terms of domain architecture, SWIRM spans 448–545 (IIIPSYASWF…YQVDPESRPM (98 aa)). S572 is modified (phosphoserine). Residue K591 forms a Glycyl lysine isopeptide (Lys-Gly) (interchain with G-Cter in SUMO2) linkage. The 52-residue stretch at 617 to 668 (SAGREWTEQETLLLLEALEMYKDDWNKVSEHVGSRTQDECILHFLRLPIEDP) folds into the SANT domain. A Glycyl lysine isopeptide (Lys-Gly) (interchain with G-Cter in SUMO2) cross-link involves residue K738. The tract at residues 744–859 (ARASGKVDPT…DAGKKKVEHE (116 aa)) is disordered. At S775 the chain carries Phosphoserine. A compositionally biased stretch (acidic residues) spans 775–784 (SEEEKMETDP). Positions 788–859 (QPEKAENKVE…DAGKKKVEHE (72 aa)) are enriched in basic and acidic residues. A Glycyl lysine isopeptide (Lys-Gly) (interchain with G-Cter in SUMO2) cross-link involves residue K795. S821 and S824 each carry phosphoserine. Residues K828 and K855 each participate in a glycyl lysine isopeptide (Lys-Gly) (interchain with G-Cter in SUMO2) cross-link. Residues 909–945 (KLRHFEELETIMDREKEALEQQRQQLLTERQNFHMEQ) are a coiled coil. Position 947 is an N6-acetyllysine (K947). Disordered regions lie at residues 955 to 1021 (QQME…PGPG) and 1041 to 1104 (IHPT…SATP). Residues 956–973 (QMEQQQQHGQTPQQAHQH) are compositionally biased toward low complexity. Pro residues-rich tracts occupy residues 994-1017 (QQPP…PGQI) and 1048-1057 (PTPPGMPPMP). The residue at position 1064 (R1064) is an Asymmetric dimethylarginine. Residues 1073 to 1104 (MYPPPPQQQQPPPPADGVPPPPAPGPPASATP) are compositionally biased toward pro residues.

The protein belongs to the SMARCC family. Component of the multiprotein chromatin-remodeling complexes SWI/SNF: SWI/SNF-A (BAF), SWI/SNF-B (PBAF) and related complexes. The canonical complex contains a catalytic subunit (either SMARCA4/BRG1/BAF190A or SMARCA2/BRM/BAF190B) and at least SMARCE1, ACTL6A/BAF53, SMARCC1/BAF155, SMARCC2/BAF170, and SMARCB1/SNF5/BAF47. Other subunits specific to each of the complexes may also be present permitting several possible combinations developmentally and tissue specific. Component of the BAF complex, which includes at least actin (ACTB), ARID1A/BAF250A, ARID1B/BAF250B, SMARCA2/BRM, SMARCA4/BRG1, ACTL6A/BAF53, ACTL6B/BAF53B, SMARCE1/BAF57, SMARCC1/BAF155, SMARCC2/BAF170, SMARCB1/SNF5/INI1, and one or more SMARCD1/BAF60A, SMARCD2/BAF60B, or SMARCD3/BAF60C. In muscle cells, the BAF complex also contains DPF3. Component of neural progenitors-specific chromatin remodeling complex (npBAF complex) composed of at least, ARID1A/BAF250A or ARID1B/BAF250B, SMARCD1/BAF60A, SMARCD3/BAF60C, SMARCA2/BRM/BAF190B, SMARCA4/BRG1/BAF190A, SMARCB1/BAF47, SMARCC1/BAF155, SMARCE1/BAF57, SMARCC2/BAF170, PHF10/BAF45A, ACTL6A/BAF53A and actin. Component of neuron-specific chromatin remodeling complex (nBAF complex) composed of at least, ARID1A/BAF250A or ARID1B/BAF250B, SMARCD1/BAF60A, SMARCD3/BAF60C, SMARCA2/BRM/BAF190B, SMARCA4/BRG1/BAF190A, SMARCB1/BAF47, SMARCC1/BAF155, SMARCE1/BAF57, SMARCC2/BAF170, DPF1/BAF45B, DPF3/BAF45C, ACTL6B/BAF53B and actin. Component of the SWI/SNF-B (PBAF) chromatin remodeling complex, at least composed of SMARCA4/BRG1, SMARCB1/BAF47/SNF5, ACTL6A/BAF53A or ACTL6B/BAF53B, SMARCE1/BAF57, SMARCD1/BAF60A, SMARCD2/BAF60B, perhaps SMARCD3/BAF60C, SMARCC1/BAF155, SMARCC2/BAF170, PBRM1/BAF180, ARID2/BAF200 and actin. Component of SWI/SNF (GBAF) subcomplex, which includes at least BICRA or BICRAL (mutually exclusive), BRD9, SS18, SMARCA2/BRM, SMARCA4/BRG1/BAF190A, ACTL6A/BAF53, SMARCC1/BAF155, and SMARCD1/BAF60A. May also interact with the SIN3A histone deacetylase transcription repressor complex in conjunction with SMARCA2 and SMARCA4. The minimal complex composed of SMARCC1 and SMARCA4 seems to be able to associate with cyclin such as CCNE1 or transcription factors such as KLF1 or GATA1. Interacts with NR3C1 and SMARD1. Interacts with TRIP12; leading to disrupt interaction between TRIP12 and SMARCE1 and prevent SMARCE1 ubiquitination. Interacts with CEBPB (when not methylated). Interacts with KDM6B. Interacts with MKKS; the interaction takes place predominantly in the cytoplasm and may modulate SMARCC1 location. Interacts with DPF2. Interacts with PRDM1/BLIMP1. Interacts with DPF3a (isoform 2 of DPF3/BAF45C) and with HDGFL2 in a DPF3a-dependent manner. Highly expressed in adult brain, testis and thymus.

The protein resides in the nucleus. It is found in the cytoplasm. Its function is as follows. Involved in transcriptional activation and repression of select genes by chromatin remodeling (alteration of DNA-nucleosome topology). Component of SWI/SNF chromatin remodeling complexes that carry out key enzymatic activities, changing chromatin structure by altering DNA-histone contacts within a nucleosome in an ATP-dependent manner. May stimulate the ATPase activity of the catalytic subunit of the complex. Belongs to the neural progenitors-specific chromatin remodeling complex (npBAF complex) and the neuron-specific chromatin remodeling complex (nBAF complex). During neural development a switch from a stem/progenitor to a postmitotic chromatin remodeling mechanism occurs as neurons exit the cell cycle and become committed to their adult state. The transition from proliferating neural stem/progenitor cells to postmitotic neurons requires a switch in subunit composition of the npBAF and nBAF complexes. As neural progenitors exit mitosis and differentiate into neurons, npBAF complexes which contain ACTL6A/BAF53A and PHF10/BAF45A, are exchanged for homologous alternative ACTL6B/BAF53B and DPF1/BAF45B or DPF3/BAF45C subunits in neuron-specific complexes (nBAF). The npBAF complex is essential for the self-renewal/proliferative capacity of the multipotent neural stem cells. The nBAF complex along with CREST plays a role regulating the activity of genes essential for dendrite growth. The protein is SWI/SNF complex subunit SMARCC1 (Smarcc1) of Mus musculus (Mouse).